A 21-amino-acid polypeptide reads, in one-letter code: Pedibin (21 aa).

A disordered region spans residues 1-21 (AGEDVSHELEEKEKALANHSE).

In terms of biological role, morphogenetically active peptide. Active in foot development. The protein is Pedibin of Hydra vulgaris (Hydra).